We begin with the raw amino-acid sequence, 290 residues long: Probable aquaporin PIP2-7 (290 aa).

The next 2 helical transmembrane spans lie at 45–65 (ALIA…ATVI) and 79–99 (GVGY…LVYC). The short motif at 109–111 (NPA) is the NPA 1 element. Helical transmembrane passes span 128 to 148 (VLYV…VKGI), 168 to 188 (SAAG…YTVF), and 202 to 222 (IPVL…LATI). The short motif at 230–232 (NPA) is the NPA 2 element. The chain crosses the membrane as a helical span at residues 252–272 (IFWVGPVIGAFLAAAYHKLVL).

It belongs to the MIP/aquaporin (TC 1.A.8) family. PIP (TC 1.A.8.11) subfamily. In terms of tissue distribution, expressed in roots.

The protein resides in the cell membrane. Functionally, aquaporins facilitate the transport of water and small neutral solutes across cell membranes. In Oryza sativa subsp. japonica (Rice), this protein is Probable aquaporin PIP2-7 (PIP2-7).